A 359-amino-acid chain; its full sequence is Probable ribonucleotide transport ATP-binding protein mkl (359 aa).

Residues 28–264 (IEVNGLTKSF…DEPVVRQFLN (237 aa)) enclose the ABC transporter domain. Position 60 to 67 (60 to 67 (GPSGTGKS)) interacts with ATP.

Belongs to the ABC transporter superfamily.

Not known, could be involved in the transport of ribonucleotides. The polypeptide is Probable ribonucleotide transport ATP-binding protein mkl (mkl) (Mycobacterium bovis (strain ATCC BAA-935 / AF2122/97)).